Reading from the N-terminus, the 596-residue chain is Sensor protein ChvG (596 aa).

Residues 1–22 are disordered; it reads MLKKTPETVSDSDDAEERGSER. Residues 1-47 lie on the Cytoplasmic side of the membrane; sequence MLKKTPETVSDSDDAEERGSERRHRIHPLTIIRRIFGNAVFSSLTRR. A helical transmembrane segment spans residues 48-68; sequence ILFFNVAATVVLVGGILYLNQ. Residues 69–283 are Periplasmic-facing; the sequence is FREGLIDARV…VHAERLAIMR (215 aa). The chain crosses the membrane as a helical span at residues 284–304; it reads VFGIATLVNIVLSLLLSSTIA. One can recognise an HAMP domain in the interval 301-356; sequence STIATPLRRLSAAAIRVRRGARTREEIPDFSARQDEIGNLSIALREMTTALYDRID. The Cytoplasmic portion of the chain corresponds to 305–596; the sequence is TPLRRLSAAA…SLPAAETHER (292 aa). Residues 364 to 592 form the Histidine kinase domain; it reads DVSHELKNPL…RFTLSLPAAE (229 aa). Histidine 367 carries the phosphohistidine modification.

It localises to the cell inner membrane. The catalysed reaction is ATP + protein L-histidine = ADP + protein N-phospho-L-histidine.. In terms of biological role, member of a two-component regulatory system ChvG/ChvI. Activates ChvI by phosphorylation (Potential). The chain is Sensor protein ChvG (chvG) from Agrobacterium fabrum (strain C58 / ATCC 33970) (Agrobacterium tumefaciens (strain C58)).